A 244-amino-acid chain; its full sequence is 6-carboxyhexanoate--CoA ligase (244 aa).

This sequence belongs to the BioW family. Homodimer. The cofactor is Mg(2+).

The enzyme catalyses heptanedioate + ATP + CoA = 6-carboxyhexanoyl-CoA + AMP + diphosphate. It participates in metabolic intermediate metabolism; pimeloyl-CoA biosynthesis; pimeloyl-CoA from pimelate: step 1/1. Its function is as follows. Catalyzes the transformation of pimelate into pimeloyl-CoA with concomitant hydrolysis of ATP to AMP. This is 6-carboxyhexanoate--CoA ligase from Methanococcus maripaludis (strain C7 / ATCC BAA-1331).